The following is a 425-amino-acid chain: AP-3 complex subunit mu (425 aa).

The region spanning 175–423 (TNEFFIHVLE…TIIAQNVSFR (249 aa)) is the MHD domain.

This sequence belongs to the adaptor complexes medium subunit family.

The protein localises to the cytoplasm. It is found in the cytoskeleton. It localises to the microtubule organizing center. The protein resides in the spindle pole body. Its subcellular location is the membrane. The protein localises to the golgi apparatus. It is found in the cytoplasmic vesicle membrane. Part of the AP-3 complex, an adaptor-related complex which is not clathrin-associated. The complex is associated with the Golgi region as well as more peripheral structures. It facilitates the budding of vesicles from the Golgi membrane and may be directly involved in trafficking to the vacuole. This chain is AP-3 complex subunit mu (apm3), found in Schizosaccharomyces pombe (strain 972 / ATCC 24843) (Fission yeast).